The chain runs to 311 residues: Natural killer cell receptor 2B4 (311 aa).

A signal peptide spans 1-19 (MLQQTVLLSLFLLLRAHQG). The Extracellular segment spans residues 20–223 (QDCADSSEEV…CQSVPSKFNY (204 aa)). A disulfide bridge connects residues C22 and C118. 2 Ig-like domains span residues 22-128 (CADS…LIFD) and 131-215 (ETPH…QSCQ). N-linked (GlcNAc...) asparagine glycosylation is found at N101, N144, N160, N183, N196, and N205. Cysteines 153 and 195 form a disulfide. A helical membrane pass occupies residues 224 to 247 (LPFMVSIGILVKFFHGAIDCFCVW). Residues 248–311 (NRKRKQSQSI…RRLFQFINRS (64 aa)) lie on the Cytoplasmic side of the membrane. A disordered region spans residues 275–301 (RDQRGHFRASGSSSDVRGDERGQRESD). Residues 290–301 (VRGDERGQRESD) are compositionally biased toward basic and acidic residues.

In terms of assembly, interacts with CD48. Interacts (via phosphorylated ITSM 1-4) with SH2D1A (via SH2 domain); SH2D1A probably mediates association with FYN. Interacts (via phosphorylated ITSM 3) with PTPN11/SHP-2, INPP5D/SHIP1, PTPN6/SHP-1 and CSK; binding of SH2D1A/SAP prevents association with PTPN11, PTPN6 and CSK; conflictingly a similar association has been described for phosphorylated ITSM 1 also including GRB2 and PLCG1. Interacts weakly (via phosphorylated ITSM 2) with PTPN11/SHP-2 and CSK. Interacts with SH2D1B. Interacts with PIK3R1; PI3K recruits SH2D1A. Interacts with MHC class I proteins; the interaction is proposed to prevent self-killing of NK cells. N-linked glycosylation is essential for the binding to its ligand CD48. Also O-glycosylated, in contrast, O-linked sialylation has a negative impact on ligand binding. Post-translationally, phosphorylated by FYN and CSK on tyrosine residues following activation. Coligation with inhibitory receptors such as KIR2DL1 inhibits phosphorylation upon contact of NK cells with sensitive target cells.

It is found in the membrane. Its subcellular location is the cell membrane. The protein localises to the membrane raft. Functionally, heterophilic receptor of the signaling lymphocytic activation molecule (SLAM) family; its ligand is CD48. SLAM receptors triggered by homo- or heterotypic cell-cell interactions are modulating the activation and differentiation of a wide variety of immune cells and thus are involved in the regulation and interconnection of both innate and adaptive immune response. Activities are controlled by presence or absence of small cytoplasmic adapter proteins, SH2D1A/SAP and/or SH2D1B/EAT-2. Acts as activating natural killer (NK) cell receptor. Activating function implicates association with SH2D1A and FYN. Downstreaming signaling involves predominantly VAV1, and, to a lesser degree, INPP5D/SHIP1 and CBL. Signal attenuation in the absence of SH2D1A is proposed to be dependent on INPP5D and to a lesser extent PTPN6/SHP-1 and PTPN11/SHP-2. Stimulates NK cell cytotoxicity, production of IFN-gamma and granule exocytosis. Optimal expansion and activation of NK cells seems to be dependent on the engagement of CD244 with CD48 expressed on neighboring NK cells. Acts as costimulator in NK activation by enhancing signals by other NK receptors such as NCR3 and NCR1. At early stages of NK cell differentiation may function as an inhibitory receptor possibly ensuring the self-tolerance of developing NK cells. Involved in the regulation of CD8(+) T-cell proliferation; expression on activated T-cells and binding to CD48 provides costimulatory-like function for neighboring T-cells. Inhibits inflammatory responses in dendritic cells (DCs). This Rattus norvegicus (Rat) protein is Natural killer cell receptor 2B4 (Cd244).